The following is a 142-amino-acid chain: Transcriptional regulator MraZ (142 aa).

2 consecutive SpoVT-AbrB domains span residues 5–51 (ASSL…PRPV) and 77–120 (ASDV…DAAR).

The protein belongs to the MraZ family. In terms of assembly, forms oligomers.

It is found in the cytoplasm. The protein resides in the nucleoid. This chain is Transcriptional regulator MraZ, found in Herminiimonas arsenicoxydans.